The sequence spans 132 residues: ATP synthase epsilon chain (132 aa).

Belongs to the ATPase epsilon chain family. F-type ATPases have 2 components, CF(1) - the catalytic core - and CF(0) - the membrane proton channel. CF(1) has five subunits: alpha(3), beta(3), gamma(1), delta(1), epsilon(1). CF(0) has three main subunits: a, b and c.

It is found in the cell membrane. In terms of biological role, produces ATP from ADP in the presence of a proton gradient across the membrane. The polypeptide is ATP synthase epsilon chain (Desulfitobacterium hafniense (strain Y51)).